The sequence spans 535 residues: Glutamate--cysteine ligase (535 aa).

The protein belongs to the glutamate--cysteine ligase type 1 family. Type 1 subfamily.

The enzyme catalyses L-cysteine + L-glutamate + ATP = gamma-L-glutamyl-L-cysteine + ADP + phosphate + H(+). The protein operates within sulfur metabolism; glutathione biosynthesis; glutathione from L-cysteine and L-glutamate: step 1/2. The protein is Glutamate--cysteine ligase of Pseudomonas syringae pv. syringae (strain B728a).